Here is a 267-residue protein sequence, read N- to C-terminus: Orotidine 5'-phosphate decarboxylase (267 aa).

Substrate-binding positions include Asp-38, 60–62 (KTH), 92–101 (DRKFADIGNT), Tyr-218, and Arg-236. Lys-94 (proton donor) is an active-site residue.

This sequence belongs to the OMP decarboxylase family.

It carries out the reaction orotidine 5'-phosphate + H(+) = UMP + CO2. It participates in pyrimidine metabolism; UMP biosynthesis via de novo pathway; UMP from orotate: step 2/2. This Debaryomyces hansenii (strain ATCC 36239 / CBS 767 / BCRC 21394 / JCM 1990 / NBRC 0083 / IGC 2968) (Yeast) protein is Orotidine 5'-phosphate decarboxylase (URA3).